The sequence spans 265 residues: Mlc titration factor A (265 aa).

Residues histidine 111, histidine 148, histidine 152, and glutamate 211 each coordinate Zn(2+).

Belongs to the MtfA family. Interacts with Mlc. It depends on Zn(2+) as a cofactor.

It localises to the cytoplasm. In terms of biological role, involved in the modulation of the activity of the glucose-phosphotransferase system (glucose-PTS). Interacts with the transcriptional repressor Mlc, preventing its interaction with DNA and leading to the modulation of expression of genes regulated by Mlc, including ptsG, which encodes the PTS system glucose-specific EIICB component. Its function is as follows. Shows zinc-dependent metallopeptidase activity. This chain is Mlc titration factor A, found in Salmonella agona (strain SL483).